The chain runs to 340 residues: N-acetyl-gamma-glutamyl-phosphate reductase (340 aa).

C146 is a catalytic residue.

This sequence belongs to the NAGSA dehydrogenase family. Type 1 subfamily.

It localises to the cytoplasm. It carries out the reaction N-acetyl-L-glutamate 5-semialdehyde + phosphate + NADP(+) = N-acetyl-L-glutamyl 5-phosphate + NADPH + H(+). The protein operates within amino-acid biosynthesis; L-arginine biosynthesis; N(2)-acetyl-L-ornithine from L-glutamate: step 3/4. Catalyzes the NADPH-dependent reduction of N-acetyl-5-glutamyl phosphate to yield N-acetyl-L-glutamate 5-semialdehyde. The protein is N-acetyl-gamma-glutamyl-phosphate reductase of Streptococcus thermophilus (strain ATCC BAA-491 / LMD-9).